Here is a 174-residue protein sequence, read N- to C-terminus: uncharacterized protein (174 aa).

A helical membrane pass occupies residues 7–24 (LLLLAFAVCLAVGFSGCL).

Its subcellular location is the membrane. This is an uncharacterized protein from Methanocaldococcus jannaschii (strain ATCC 43067 / DSM 2661 / JAL-1 / JCM 10045 / NBRC 100440) (Methanococcus jannaschii).